Reading from the N-terminus, the 133-residue chain is Snaclec echicetin subunit alpha (133 aa).

Disulfide bonds link Cys-4/Cys-15, Cys-31/Cys-127, and Cys-102/Cys-119. In terms of domain architecture, C-type lectin spans 11 to 128 (YEGHCYQLFR…CEFKFPFVCK (118 aa)).

This sequence belongs to the snaclec family. Heterodimer of subunits alpha and beta; disulfide-linked. Forms an active complex with the pentameric immunoglobuline Mkappa (IgMkappa). As to expression, expressed by the venom gland.

The protein localises to the secreted. Functionally, echicetin itself inhibits aggregation of washed platelets induced by vWF, thrombin or alboaggregin-A. However, when complexed with the pentameric plasma immunoglobulin Mkappa (IgMkappa), echicetin binds specifically to GPIb and activates platelets. This is caused by P-selectin expression and activation of alpha-IIb/beta-3 as well as tyrosine phosphorylation of several signal transduction molecules, including p53/56(LYN), p64, p72(SYK), p70 to p90, and p120. In vivo, it induces thrombocytopenia when injected into mice, probably accounting of activation of platelets rather than inhibition. This Echis carinatus sochureki (Saw-scaled viper) protein is Snaclec echicetin subunit alpha.